A 258-amino-acid polypeptide reads, in one-letter code: Isoprenyl transferase (258 aa).

Residue D38 is part of the active site. D38 contributes to the Mg(2+) binding site. Residues 39 to 42 (GNGR), W43, R51, H55, and 83 to 85 (STE) contribute to the substrate site. Residue N86 is the Proton acceptor of the active site. Residues W87, R89, R206, and 212 to 214 (RIS) contribute to the substrate site. Mg(2+) is bound at residue E225.

This sequence belongs to the UPP synthase family. Homodimer. Mg(2+) serves as cofactor.

In terms of biological role, catalyzes the condensation of isopentenyl diphosphate (IPP) with allylic pyrophosphates generating different type of terpenoids. The protein is Isoprenyl transferase of Bacillus thuringiensis subsp. konkukian (strain 97-27).